We begin with the raw amino-acid sequence, 400 residues long: NADH-quinone oxidoreductase subunit D (400 aa).

Belongs to the complex I 49 kDa subunit family. In terms of assembly, NDH-1 is composed of 14 different subunits. Subunits NuoB, C, D, E, F, and G constitute the peripheral sector of the complex.

It is found in the cell inner membrane. The catalysed reaction is a quinone + NADH + 5 H(+)(in) = a quinol + NAD(+) + 4 H(+)(out). In terms of biological role, NDH-1 shuttles electrons from NADH, via FMN and iron-sulfur (Fe-S) centers, to quinones in the respiratory chain. The immediate electron acceptor for the enzyme in this species is believed to be a menaquinone. Couples the redox reaction to proton translocation (for every two electrons transferred, four hydrogen ions are translocated across the cytoplasmic membrane), and thus conserves the redox energy in a proton gradient. The chain is NADH-quinone oxidoreductase subunit D from Chlorobaculum tepidum (strain ATCC 49652 / DSM 12025 / NBRC 103806 / TLS) (Chlorobium tepidum).